The sequence spans 213 residues: MAAATASAAATPAKKAAPKKPAAAPEHPSYKEMLTKAITELKERNGSSRQAIKKFIQSNFKVKDNFDVQFNQALRRGVEKGEFVQPKGPSGTVKLAKKEKAAAAPKKPAAKKAAAPKKDAAPKKAAAPKKAAAPKSAAAKKKLLDAKKAAAKKPAAKKAAAPKKVAAPVEKPAPVKTTTTKSGRVTKASTTSKPAPKKKAAAPKKAATPAKSS.

Residues 1-25 show a composition bias toward low complexity; sequence MAAATASAAATPAKKAAPKKPAAAP. Disordered regions lie at residues 1 to 30 and 81 to 213; these read MAAA…HPSY and GEFV…AKSS. The H15 domain maps to 26–97; the sequence is EHPSYKEMLT…GPSGTVKLAK (72 aa). 4 stretches are compositionally biased toward low complexity: residues 102–113, 123–137, 157–176, and 203–213; these read AAAPKKPAAKKA, KKAA…PKSA, KKAA…APVK, and PKKAATPAKSS.

This sequence belongs to the histone H1/H5 family.

Its subcellular location is the nucleus. It is found in the chromosome. Its function is as follows. Could act as an H1-type linker histone. The sequence is that of Histone H1 from Ascobolus immersus.